The primary structure comprises 189 residues: MKTLAPSYLKHQFLIAMPHMADPNFAQTLTYIVEHNEHGAMGLVVNRPQELSLADILEQLRPDEMPPASTSQVPIYQGGPVQTDRGFVLHSSECSFQATVALEGLSLTTSQDVLLAIAAGVGPKQSLITLGYAGWEAGQLEAELADNAWLNCPFDPEIIFGMANDLRLEAAAASLGINLHLLTSQAGHA.

It belongs to the UPF0301 (AlgH) family.

This Pseudomonas putida (strain GB-1) protein is UPF0301 protein PputGB1_5045.